The chain runs to 372 residues: Queuine tRNA-ribosyltransferase (372 aa).

D92 acts as the Proton acceptor in catalysis. Residues 92–96 (DSGGY), D146, Q188, and G215 contribute to the substrate site. Residues 246–252 (GIGTIRE) are RNA binding. D265 (nucleophile) is an active-site residue. The tract at residues 270 to 274 (TRLGR) is RNA binding; important for wobble base 34 recognition. Zn(2+)-binding residues include C303, C305, C308, and H334.

Belongs to the queuine tRNA-ribosyltransferase family. As to quaternary structure, homodimer. Within each dimer, one monomer is responsible for RNA recognition and catalysis, while the other monomer binds to the replacement base PreQ1. Requires Zn(2+) as cofactor.

The enzyme catalyses 7-aminomethyl-7-carbaguanine + guanosine(34) in tRNA = 7-aminomethyl-7-carbaguanosine(34) in tRNA + guanine. The protein operates within tRNA modification; tRNA-queuosine biosynthesis. In terms of biological role, catalyzes the base-exchange of a guanine (G) residue with the queuine precursor 7-aminomethyl-7-deazaguanine (PreQ1) at position 34 (anticodon wobble position) in tRNAs with GU(N) anticodons (tRNA-Asp, -Asn, -His and -Tyr). Catalysis occurs through a double-displacement mechanism. The nucleophile active site attacks the C1' of nucleotide 34 to detach the guanine base from the RNA, forming a covalent enzyme-RNA intermediate. The proton acceptor active site deprotonates the incoming PreQ1, allowing a nucleophilic attack on the C1' of the ribose to form the product. After dissociation, two additional enzymatic reactions on the tRNA convert PreQ1 to queuine (Q), resulting in the hypermodified nucleoside queuosine (7-(((4,5-cis-dihydroxy-2-cyclopenten-1-yl)amino)methyl)-7-deazaguanosine). The chain is Queuine tRNA-ribosyltransferase from Prochlorococcus marinus (strain SARG / CCMP1375 / SS120).